A 164-amino-acid polypeptide reads, in one-letter code: Phosphopantetheine adenylyltransferase (164 aa).

A substrate-binding site is contributed by Ser10. Residues 10–11 (SF) and His18 each bind ATP. Residues Lys42, Met74, and Arg88 each contribute to the substrate site. ATP contacts are provided by residues 89–91 (GLR), Glu99, and 124–130 (YFFVSAR).

It belongs to the bacterial CoaD family. In terms of assembly, homohexamer. It depends on Mg(2+) as a cofactor.

The protein resides in the cytoplasm. The enzyme catalyses (R)-4'-phosphopantetheine + ATP + H(+) = 3'-dephospho-CoA + diphosphate. Its pathway is cofactor biosynthesis; coenzyme A biosynthesis; CoA from (R)-pantothenate: step 4/5. Functionally, reversibly transfers an adenylyl group from ATP to 4'-phosphopantetheine, yielding dephospho-CoA (dPCoA) and pyrophosphate. The protein is Phosphopantetheine adenylyltransferase of Anaeromyxobacter dehalogenans (strain 2CP-1 / ATCC BAA-258).